A 95-amino-acid chain; its full sequence is Aspartyl/glutamyl-tRNA(Asn/Gln) amidotransferase subunit C (95 aa).

Belongs to the GatC family. Heterotrimer of A, B and C subunits.

The catalysed reaction is L-glutamyl-tRNA(Gln) + L-glutamine + ATP + H2O = L-glutaminyl-tRNA(Gln) + L-glutamate + ADP + phosphate + H(+). It catalyses the reaction L-aspartyl-tRNA(Asn) + L-glutamine + ATP + H2O = L-asparaginyl-tRNA(Asn) + L-glutamate + ADP + phosphate + 2 H(+). Functionally, allows the formation of correctly charged Asn-tRNA(Asn) or Gln-tRNA(Gln) through the transamidation of misacylated Asp-tRNA(Asn) or Glu-tRNA(Gln) in organisms which lack either or both of asparaginyl-tRNA or glutaminyl-tRNA synthetases. The reaction takes place in the presence of glutamine and ATP through an activated phospho-Asp-tRNA(Asn) or phospho-Glu-tRNA(Gln). The protein is Aspartyl/glutamyl-tRNA(Asn/Gln) amidotransferase subunit C of Cereibacter sphaeroides (strain ATCC 17023 / DSM 158 / JCM 6121 / CCUG 31486 / LMG 2827 / NBRC 12203 / NCIMB 8253 / ATH 2.4.1.) (Rhodobacter sphaeroides).